The sequence spans 154 residues: Superoxide dismutase [Cu-Zn] 1 (154 aa).

His47, His49, and His64 together coordinate Cu cation. An intrachain disulfide couples Cys58 to Cys147. 4 residues coordinate Zn(2+): His64, His72, His81, and Asp84. Residue His121 coordinates Cu cation. Arg144 contacts substrate.

It belongs to the Cu-Zn superoxide dismutase family. In terms of assembly, homodimer. Cu cation serves as cofactor. Zn(2+) is required as a cofactor.

The protein localises to the cytoplasm. It catalyses the reaction 2 superoxide + 2 H(+) = H2O2 + O2. Destroys radicals which are normally produced within the cells and which are toxic to biological systems. This Debaryomyces hansenii (strain ATCC 36239 / CBS 767 / BCRC 21394 / JCM 1990 / NBRC 0083 / IGC 2968) (Yeast) protein is Superoxide dismutase [Cu-Zn] 1 (SOD1).